The primary structure comprises 452 residues: Phosphoglucosamine mutase (452 aa).

Residue Ser-97 is the Phosphoserine intermediate of the active site. Ser-97, Asp-236, Asp-238, and Asp-240 together coordinate Mg(2+). Position 97 is a phosphoserine (Ser-97).

Belongs to the phosphohexose mutase family. Mg(2+) is required as a cofactor. Activated by phosphorylation.

The catalysed reaction is alpha-D-glucosamine 1-phosphate = D-glucosamine 6-phosphate. Functionally, catalyzes the conversion of glucosamine-6-phosphate to glucosamine-1-phosphate. The polypeptide is Phosphoglucosamine mutase (Prochlorococcus marinus (strain MIT 9515)).